A 246-amino-acid chain; its full sequence is MSGHSKWHNIQAKKGKMDAKRGKIFTKIGRELIIASKEGGSNPDTNSKLRDVIAKARANNMPQDTISRAIKKGAGELEGVNYEEMTYEGYGPNGVAFVVSTLTDNKNRTAGNVRAAFSKHGGNLGETGCVGWMFQSKGQMIIERNEDMDEDEIMMVALDAGAEDFESSEEVFEIITTPESFGEVREKLEAEGFEFISAEVTMIPDTTIEISMERAAGLQKLIDKLEDDDDVQNVYHNAEFPEEWEG.

This sequence belongs to the TACO1 family.

It localises to the cytoplasm. This is Probable transcriptional regulatory protein CTC_02215 from Clostridium tetani (strain Massachusetts / E88).